The following is a 290-amino-acid chain: Fructose-1,6-bisphosphatase class 1 (290 aa).

Positions 78, 96, 98, and 99 each coordinate Mg(2+). Residues 99–102 (DGSS), Y201, and K226 contribute to the substrate site. A Mg(2+)-binding site is contributed by E232.

Belongs to the FBPase class 1 family. Homotetramer. Mg(2+) serves as cofactor.

The protein localises to the cytoplasm. It catalyses the reaction beta-D-fructose 1,6-bisphosphate + H2O = beta-D-fructose 6-phosphate + phosphate. The protein operates within carbohydrate biosynthesis; gluconeogenesis. The sequence is that of Fructose-1,6-bisphosphatase class 1 from Helicobacter acinonychis (strain Sheeba).